A 381-amino-acid chain; its full sequence is Erythronate-4-phosphate dehydrogenase (381 aa).

2 residues coordinate substrate: serine 45 and threonine 66. NAD(+) contacts are provided by residues aspartate 146, threonine 174, 205-207, and aspartate 231; that span reads ASR. Arginine 207 is an active-site residue. Glutamate 236 is a catalytic residue. Catalysis depends on histidine 253, which acts as the Proton donor. Glycine 256 provides a ligand contact to NAD(+). Substrate is bound at residue tyrosine 257.

Belongs to the D-isomer specific 2-hydroxyacid dehydrogenase family. PdxB subfamily. In terms of assembly, homodimer.

Its subcellular location is the cytoplasm. The catalysed reaction is 4-phospho-D-erythronate + NAD(+) = (R)-3-hydroxy-2-oxo-4-phosphooxybutanoate + NADH + H(+). It functions in the pathway cofactor biosynthesis; pyridoxine 5'-phosphate biosynthesis; pyridoxine 5'-phosphate from D-erythrose 4-phosphate: step 2/5. In terms of biological role, catalyzes the oxidation of erythronate-4-phosphate to 3-hydroxy-2-oxo-4-phosphonooxybutanoate. The chain is Erythronate-4-phosphate dehydrogenase from Stutzerimonas stutzeri (strain A1501) (Pseudomonas stutzeri).